The sequence spans 414 residues: Phosphoglycerate kinase (414 aa).

The (2R)-3-phosphoglycerate site is built by valine 23, aspartate 24, phenylalanine 25, asparagine 26, arginine 39, serine 62, histidine 63, glycine 65, and arginine 66. A Phosphotyrosine modification is found at tyrosine 75. At serine 76 the chain carries Phosphoserine. (2R)-3-phosphoglycerate is bound by residues leucine 121 and arginine 122. A Phosphoserine modification is found at serine 143. Residues histidine 168 and arginine 169 each contribute to the (2R)-3-phosphoglycerate site. A phosphoserine mark is found at serine 172, serine 173, and serine 183. Glycine 211 lines the ADP pocket. Glycine 211 contacts CDP. Positions 212 and 213 each coordinate AMP. Alanine 212 provides a ligand contact to ATP. Alanine 212 is a binding site for Mg(2+). The Mg(2+) site is built by alanine 215 and aspartate 216. Aspartate 216 is a CDP binding site. Lysine 217 contributes to the AMP binding site. Lysine 217 provides a ligand contact to ATP. ADP is bound at residue glycine 235. Residue glycine 235 participates in CDP binding. Glycine 236 provides a ligand contact to AMP. Residue glycine 236 participates in ATP binding. Phosphoserine is present on residues serine 253 and serine 260. Threonine 299 is modified (phosphothreonine). Glycine 310 serves as a coordination point for AMP. Glycine 310 is an ATP binding site. Position 328 is a phosphoserine (serine 328). CDP is bound by residues glycine 335, alanine 337, and phenylalanine 340. Phenylalanine 340 provides a ligand contact to ADP. Glutamate 341 contacts AMP. Glutamate 341 is a binding site for ATP. The residue at position 351 (serine 351) is a Phosphoserine. ATP contacts are provided by aspartate 372 and threonine 373. Aspartate 372 lines the Mg(2+) pocket. Threonine 373 is modified (phosphothreonine). Residues serine 387, serine 390, serine 412, and serine 413 each carry the phosphoserine modification.

The protein belongs to the phosphoglycerate kinase family. As to quaternary structure, monomer. Mg(2+) serves as cofactor.

It is found in the cytoplasm. The protein resides in the mitochondrion. It catalyses the reaction (2R)-3-phosphoglycerate + ATP = (2R)-3-phospho-glyceroyl phosphate + ADP. It participates in carbohydrate degradation; glycolysis; pyruvate from D-glyceraldehyde 3-phosphate: step 2/5. Its function is as follows. Catalyzes one of the two ATP producing reactions in the glycolytic pathway via the reversible conversion of 1,3-diphosphoglycerate to 3-phosphoglycerate. Both L- and D- forms of purine and pyrimidine nucleotides can be used as substrates, but the activity is much lower on pyrimidines. Negatively regulates the biosynthesis of acetyl-CoA from pyruvate in the mitochondrion. The chain is Phosphoglycerate kinase (pgk1) from Schizosaccharomyces pombe (strain 972 / ATCC 24843) (Fission yeast).